We begin with the raw amino-acid sequence, 153 residues long: MVRPKPTSVLSFDYGHKRIGLAGCDPLGITVTALSPIHRISFQKDLTLIKSLCIEREIKGLIVGLPLDESGQNTVQSIHCQNYGIKIAKELDLPLAWVNEHSSSWDAGQKYNLQNDRTGKLDSAVAALLLEQWLREGPELQPVSKLDSPRIKF.

It belongs to the YqgF nuclease family.

The protein localises to the cytoplasm. In terms of biological role, could be a nuclease involved in processing of the 5'-end of pre-16S rRNA. This Prochlorococcus marinus (strain SARG / CCMP1375 / SS120) protein is Putative pre-16S rRNA nuclease.